Consider the following 332-residue polypeptide: Adenosine deaminase (332 aa).

Residues H12 and H14 each contribute to the Zn(2+) site. Substrate is bound by residues H14, D16, and G170. Zn(2+) is bound at residue H197. The Proton donor role is filled by E200. D278 serves as a coordination point for Zn(2+). Position 279 (D279) interacts with substrate.

This sequence belongs to the metallo-dependent hydrolases superfamily. Adenosine and AMP deaminases family. Adenosine deaminase subfamily. The cofactor is Zn(2+).

The enzyme catalyses adenosine + H2O + H(+) = inosine + NH4(+). It catalyses the reaction 2'-deoxyadenosine + H2O + H(+) = 2'-deoxyinosine + NH4(+). Its function is as follows. Catalyzes the hydrolytic deamination of adenosine and 2-deoxyadenosine. The polypeptide is Adenosine deaminase (Erwinia tasmaniensis (strain DSM 17950 / CFBP 7177 / CIP 109463 / NCPPB 4357 / Et1/99)).